A 341-amino-acid polypeptide reads, in one-letter code: Phenylalanine--tRNA ligase alpha subunit (341 aa).

Position 254 (E254) interacts with Mg(2+).

It belongs to the class-II aminoacyl-tRNA synthetase family. Phe-tRNA synthetase alpha subunit type 1 subfamily. Tetramer of two alpha and two beta subunits. Requires Mg(2+) as cofactor.

The protein resides in the cytoplasm. The enzyme catalyses tRNA(Phe) + L-phenylalanine + ATP = L-phenylalanyl-tRNA(Phe) + AMP + diphosphate + H(+). In Chlorobaculum tepidum (strain ATCC 49652 / DSM 12025 / NBRC 103806 / TLS) (Chlorobium tepidum), this protein is Phenylalanine--tRNA ligase alpha subunit.